We begin with the raw amino-acid sequence, 200 residues long: ATP synthase subunit b 1 (200 aa).

Residues 14–34 (AAVIVVVSLMAFCCAGFAVAA) traverse the membrane as a helical segment.

Belongs to the ATPase B chain family. F-type ATPases have 2 components, F(1) - the catalytic core - and F(0) - the membrane proton channel. F(1) has five subunits: alpha(3), beta(3), gamma(1), delta(1), epsilon(1). F(0) has three main subunits: a(1), b(2) and c(10-14). The alpha and beta chains form an alternating ring which encloses part of the gamma chain. F(1) is attached to F(0) by a central stalk formed by the gamma and epsilon chains, while a peripheral stalk is formed by the delta and b chains.

It localises to the cell inner membrane. Its function is as follows. F(1)F(0) ATP synthase produces ATP from ADP in the presence of a proton or sodium gradient. F-type ATPases consist of two structural domains, F(1) containing the extramembraneous catalytic core and F(0) containing the membrane proton channel, linked together by a central stalk and a peripheral stalk. During catalysis, ATP synthesis in the catalytic domain of F(1) is coupled via a rotary mechanism of the central stalk subunits to proton translocation. Component of the F(0) channel, it forms part of the peripheral stalk, linking F(1) to F(0). This Desulfosudis oleivorans (strain DSM 6200 / JCM 39069 / Hxd3) (Desulfococcus oleovorans) protein is ATP synthase subunit b 1.